The chain runs to 500 residues: Bifunctional protein GlmU (500 aa).

Residues 1–242 are pyrophosphorylase; it reads MPVQTAVVVL…SAKVAGANDR (242 aa). UDP-N-acetyl-alpha-D-glucosamine contacts are provided by residues 10–13, Lys-24, Gln-81, and 86–87; these read LAAG and GT. Asp-112 is a binding site for Mg(2+). Residues Gly-151, Glu-167, Asn-182, and Asn-240 each coordinate UDP-N-acetyl-alpha-D-glucosamine. Asn-240 provides a ligand contact to Mg(2+). The tract at residues 243 to 263 is linker; that stretch reads VQLSRLAAELNRRTVENWMRA. The interval 264-500 is N-acetyltransferase; the sequence is GVTVVDPSTT…KQDLKDGIEQ (237 aa). Residues Arg-345 and Lys-363 each contribute to the UDP-N-acetyl-alpha-D-glucosamine site. The Proton acceptor role is filled by His-375. UDP-N-acetyl-alpha-D-glucosamine is bound by residues Tyr-378 and Asn-389. Acetyl-CoA contacts are provided by residues Ala-392, 398–399, Ser-417, and Ala-435; that span reads NY. The segment at 459–500 is disordered; it reads DGWVQRNRPGTPAAEAASAAGPHHSSDLHETEKQDLKDGIEQ. Over residues 482–500 the composition is skewed to basic and acidic residues; sequence HSSDLHETEKQDLKDGIEQ.

This sequence in the N-terminal section; belongs to the N-acetylglucosamine-1-phosphate uridyltransferase family. The protein in the C-terminal section; belongs to the transferase hexapeptide repeat family. Homotrimer. The cofactor is Mg(2+).

Its subcellular location is the cytoplasm. The enzyme catalyses alpha-D-glucosamine 1-phosphate + acetyl-CoA = N-acetyl-alpha-D-glucosamine 1-phosphate + CoA + H(+). The catalysed reaction is N-acetyl-alpha-D-glucosamine 1-phosphate + UTP + H(+) = UDP-N-acetyl-alpha-D-glucosamine + diphosphate. It functions in the pathway nucleotide-sugar biosynthesis; UDP-N-acetyl-alpha-D-glucosamine biosynthesis; N-acetyl-alpha-D-glucosamine 1-phosphate from alpha-D-glucosamine 6-phosphate (route II): step 2/2. It participates in nucleotide-sugar biosynthesis; UDP-N-acetyl-alpha-D-glucosamine biosynthesis; UDP-N-acetyl-alpha-D-glucosamine from N-acetyl-alpha-D-glucosamine 1-phosphate: step 1/1. The protein operates within bacterial outer membrane biogenesis; LPS lipid A biosynthesis. Functionally, catalyzes the last two sequential reactions in the de novo biosynthetic pathway for UDP-N-acetylglucosamine (UDP-GlcNAc). The C-terminal domain catalyzes the transfer of acetyl group from acetyl coenzyme A to glucosamine-1-phosphate (GlcN-1-P) to produce N-acetylglucosamine-1-phosphate (GlcNAc-1-P), which is converted into UDP-GlcNAc by the transfer of uridine 5-monophosphate (from uridine 5-triphosphate), a reaction catalyzed by the N-terminal domain. The chain is Bifunctional protein GlmU from Rhodococcus opacus (strain B4).